We begin with the raw amino-acid sequence, 168 residues long: MKMMTIYIISLLLMIGFVAFASKPSPIYGGLSLVVSGGLGCGMVVSLEDVFLGLVVFLVYLGGMLVVFGYTTAMATEEYPETWVGNVVAFIMLLFVLLLQVGWYFMSKLVYIIMAIKLFDFVETSLVGQDYNGVSQLYYCGGWALALLGWILFMTIYVVLEVVRERSY.

5 helical membrane-spanning segments follow: residues 1–21 (MKMM…VAFA), 27–47 (IYGG…VVSL), 50–70 (VFLG…VFGY), 87–107 (VVAF…YFMS), and 143–163 (WALA…LEVV).

It belongs to the complex I subunit 6 family. As to quaternary structure, core subunit of respiratory chain NADH dehydrogenase (Complex I) which is composed of 45 different subunits.

It localises to the mitochondrion inner membrane. It catalyses the reaction a ubiquinone + NADH + 5 H(+)(in) = a ubiquinol + NAD(+) + 4 H(+)(out). Core subunit of the mitochondrial membrane respiratory chain NADH dehydrogenase (Complex I) which catalyzes electron transfer from NADH through the respiratory chain, using ubiquinone as an electron acceptor. Essential for the catalytic activity and assembly of complex I. The protein is NADH-ubiquinone oxidoreductase chain 6 (MT-ND6) of Didelphis virginiana (North American opossum).